Consider the following 616-residue polypeptide: Alpha terpineol synthase, chloroplastic (616 aa).

Residues 1-41 (MALLSVAPLQKPLTSCSPFSTTMPTLGVCTPRKVVTPSIIM) constitute a chloroplast transit peptide. Residues Asp367, Asp371, and Asp519 each coordinate Mg(2+). The DDXXD motif signature appears at 367–371 (DDIYD).

It belongs to the terpene synthase family. Tpsd subfamily. It depends on Mg(2+) as a cofactor. Mn(2+) is required as a cofactor.

The protein resides in the plastid. Its subcellular location is the chloroplast. The enzyme catalyses (2E)-geranyl diphosphate + H2O = (S)-alpha-terpineol + diphosphate. It catalyses the reaction (2E)-geranyl diphosphate + H2O = 1,8-cineole + diphosphate. The catalysed reaction is (2E)-geranyl diphosphate = beta-myrcene + diphosphate. It carries out the reaction (2E)-geranyl diphosphate = (1S,5S)-sabinene + diphosphate. The protein operates within terpene metabolism; oleoresin biosynthesis. Its pathway is secondary metabolite biosynthesis; terpenoid biosynthesis. Its function is as follows. Monoterpene synthase (TPS) involved in the biosynthesis of monoterpene natural products included in conifer oleoresin secretions and volatile emissions; these compounds contribute to biotic and abiotic stress defense against herbivores and pathogens. Catalyzes the conversion of (2E)-geranyl diphosphate (GPP) to alpha-terpineol and, to a lower extent, to 1,8-cineole, myrcene and (-)-sabinene. In Pinus contorta (Shore pine), this protein is Alpha terpineol synthase, chloroplastic.